We begin with the raw amino-acid sequence, 365 residues long: Class I histocompatibility antigen, Gogo-C*0101/C*0102 alpha chain (365 aa).

The first 24 residues, 1–24 (MRVMAPRTLILLLSGALALTETWA), serve as a signal peptide directing secretion. An alpha-1 region spans residues 25–114 (GSHSMRYFFT…LRGYYNQSED (90 aa)). Over 25–308 (GSHSMRYFFT…EPSSQPTIPI (284 aa)) the chain is Extracellular. A glycan (N-linked (GlcNAc...) asparagine) is linked at Asn-110. The interval 115–206 (GSHTFQRMYG…ENGKETLQRA (92 aa)) is alpha-2. Cystine bridges form between Cys-125/Cys-188 and Cys-227/Cys-283. Positions 207–298 (DPPKTHVTHH…GLLEPLTLRW (92 aa)) are alpha-3. Residues 209 to 297 (PKTHVTHHPI…KGLLEPLTLR (89 aa)) form the Ig-like C1-type domain. The tract at residues 299-308 (EPSSQPTIPI) is connecting peptide. The helical transmembrane segment at 309–332 (VGIVAGLAVLAVVFTGTVVAAVMC) threads the bilayer. At 333–365 (RRKSSGGKGGSCSQAACSNSAQGSDESLIACKA) the chain is on the cytoplasmic side. 2 positions are modified to phosphoserine: Ser-356 and Ser-359.

This sequence belongs to the MHC class I family. As to quaternary structure, heterodimer of an alpha chain and a beta chain (beta-2-microglobulin).

The protein resides in the membrane. Functionally, involved in the presentation of foreign antigens to the immune system. This Gorilla gorilla gorilla (Western lowland gorilla) protein is Class I histocompatibility antigen, Gogo-C*0101/C*0102 alpha chain.